We begin with the raw amino-acid sequence, 725 residues long: MAAHAWPTAALLLLLVDWLLLRPVLPGIFSLLVPEVPLLRVWAVGLSRWAILGLGVRGVLGVTAGARGWLAALQPLVAALGLALPGLASFRKLSAWGALREGDNAGLLHWNSRLDAFVLSYVAALPAAALWHKLGGFWAPSGHKGAGDMLCRMLGFLDSKKGRLHLVLVLLILSCLGEMAIPFFTGRITDWILQDKTAPSFARNMWLMCILTIASTVLEFAGDGIYNITMGHMHSRVHGEVFRAVLHQETGFFLKNPTGSITSRVTEDTSNVCESISDKLNLFLWYLGRGLCLLAFMIWGSFYLTVVTLLSLPLLFLLPRRLGKVYQSLAVKVQESLAKSTQVALEALSAMPTVRSFANEEGEAQKFRQKLEEMKPLNKKEALAYVTEVWTMSVSGMLLKVGILYLGGQLVVRGAVSSGNLVSFVLYQLQFTRAVEVLLSIYPSMQKSVGASEKIFEYLDRTPCSPLSGSLAPLNMKGLVKFQDVSFAYPNHPNVQVLQGLTFTLYPGKVTALVGPNGSGKSTVAALLQNLYQPTGGKVLLDGEPLVQYDHHYLHTQVAAVGQEPLLFGRSFRENIAYGLTRTPTMEEITAVAMESGAHDFISGFPQGYDTEVGETGNQLSGGQRQAVALARALIRKPRLLILDDATSALDAGNQLRVQRLLYESPEWASRTVLLITQQLSLAERAHHILFLKEGSVCEQGTHLQLMERGGCYRSMVEALAAPSD.

Residues 1-8 (MAAHAWPT) lie on the Cytoplasmic side of the membrane. A helical transmembrane segment spans residues 9 to 29 (AALLLLLVDWLLLRPVLPGIF). At 30-38 (SLLVPEVPL) the chain is on the lumenal side. Residues 39 to 60 (LRVWAVGLSRWAILGLGVRGVL) traverse the membrane as a helical segment. Residues 61–67 (GVTAGAR) are Cytoplasmic-facing. The helical transmembrane segment at 68–88 (GWLAALQPLVAALGLALPGLA) threads the bilayer. Topologically, residues 89-110 (SFRKLSAWGALREGDNAGLLHW) are lumenal. The helical transmembrane segment at 111–131 (NSRLDAFVLSYVAALPAAALW) threads the bilayer. Over 132-163 (HKLGGFWAPSGHKGAGDMLCRMLGFLDSKKGR) the chain is Cytoplasmic. The helical transmembrane segment at 164-184 (LHLVLVLLILSCLGEMAIPFF) threads the bilayer. The ABC transmembrane type-1 domain occupies 164–447 (LHLVLVLLIL…LLSIYPSMQK (284 aa)). Residues 185-204 (TGRITDWILQDKTAPSFARN) are Lumenal-facing. A helical transmembrane segment spans residues 205-225 (MWLMCILTIASTVLEFAGDGI). Topologically, residues 226 to 275 (YNITMGHMHSRVHGEVFRAVLHQETGFFLKNPTGSITSRVTEDTSNVCES) are cytoplasmic. The helical transmembrane segment at 276-296 (ISDKLNLFLWYLGRGLCLLAF) threads the bilayer. The Lumenal portion of the chain corresponds to 297-305 (MIWGSFYLT). A helical membrane pass occupies residues 306 to 326 (VVTLLSLPLLFLLPRRLGKVY). Topologically, residues 327–395 (QSLAVKVQES…VTEVWTMSVS (69 aa)) are cytoplasmic. Positions 352–397 (PTVRSFANEEGEAQKFRQKLEEMKPLNKKEALAYVTEVWTMSVSGM) are part of the peptide-binding site. A helical membrane pass occupies residues 396–416 (GMLLKVGILYLGGQLVVRGAV). At 417–420 (SSGN) the chain is on the lumenal side. A helical membrane pass occupies residues 421 to 441 (LVSFVLYQLQFTRAVEVLLSI). Residues 430 to 464 (QFTRAVEVLLSIYPSMQKSVGASEKIFEYLDRTPC) form a part of the peptide-binding site region. Residues 442 to 725 (YPSMQKSVGA…MVEALAAPSD (284 aa)) are Cytoplasmic-facing. Residues 480–719 (VKFQDVSFAY…GGCYRSMVEA (240 aa)) form the ABC transporter domain. ATP is bound by residues 515 to 523 (GPNGSGKST), 618 to 624 (NQLSGGQ), and Gln-678. Mg(2+) is bound at residue Ser-522.

The protein belongs to the ABC transporter superfamily. ABCB family. MHC peptide exporter (TC 3.A.1.209) subfamily. In terms of assembly, heterodimer of TAP1 and TAP2 (TAP1-TAP2). A component of the peptide loading complex (PLC), interacts via TAPBP with MHCI heterodimer; this interaction mediates peptide-MHCI assembly. Interacts with PSMB5 and PSMB8. The cofactor is Mg(2+).

Its subcellular location is the endoplasmic reticulum membrane. It carries out the reaction a peptide antigen(in) + ATP + H2O = a peptide antigen(out) + ADP + phosphate + H(+). ABC transporter associated with antigen processing. In complex with TAP2 mediates unidirectional translocation of peptide antigens from cytosol to endoplasmic reticulum (ER) for loading onto MHC class I (MHCI) molecules. Uses the chemical energy of ATP to export peptides against the concentration gradient. During the transport cycle alternates between 'inward-facing' state with peptide binding site facing the cytosol to 'outward-facing' state with peptide binding site facing the ER lumen. Peptide antigen binding to ATP-loaded TAP1-TAP2 induces a switch to hydrolysis-competent 'outward-facing' conformation ready for peptide loading onto nascent MHCI molecules. Subsequently ATP hydrolysis resets the transporter to the 'inward facing' state for a new cycle. As a component of the peptide loading complex (PLC), acts as a molecular scaffold essential for peptide-MHCI assembly and antigen presentation. This is Antigen peptide transporter 1 (Tap1) from Rattus norvegicus (Rat).